We begin with the raw amino-acid sequence, 194 residues long: Putative lipoprotein LppK (194 aa).

Positions 1-26 (MSRWTHRTFFIALSAIVTTAGFGSSG) are cleaved as a signal peptide. The N-palmitoyl cysteine moiety is linked to residue C27. A lipid anchor (S-diacylglycerol cysteine) is attached at C27. The disordered stretch occupies residues 174-194 (GNSSGLTNPAPIKAPTPTPSH). A compositionally biased stretch (pro residues) spans 185 to 194 (IKAPTPTPSH).

This sequence belongs to the MTB12 family.

It is found in the cell membrane. In Mycobacterium leprae (strain TN), this protein is Putative lipoprotein LppK (lppK).